The chain runs to 152 residues: Transcriptional regulator MraZ (152 aa).

2 SpoVT-AbrB domains span residues 5-52 (ASAI…PIHE) and 81-124 (AHEV…DEQA).

The protein belongs to the MraZ family. As to quaternary structure, forms oligomers.

Its subcellular location is the cytoplasm. It localises to the nucleoid. This Shewanella sp. (strain ANA-3) protein is Transcriptional regulator MraZ.